We begin with the raw amino-acid sequence, 61 residues long: Small ribosomal subunit protein uS14C (61 aa).

Zn(2+) is bound by residues Cys24, Cys27, Cys40, and Cys43.

The protein belongs to the universal ribosomal protein uS14 family. Zinc-binding uS14 subfamily. As to quaternary structure, part of the 30S ribosomal subunit. Contacts proteins S3 and S10. Zn(2+) serves as cofactor.

Binds 16S rRNA, required for the assembly of 30S particles and may also be responsible for determining the conformation of the 16S rRNA at the A site. The protein is Small ribosomal subunit protein uS14C of Enterococcus faecalis (strain ATCC 700802 / V583).